The sequence spans 55 residues: ATP synthase F(0) complex subunit 8 (55 aa).

A helical membrane pass occupies residues 4–24 (LNPAPWFTILVFSWMIFLAII). Positions 32–41 (TSPNDSSPLS) are enriched in polar residues. The disordered stretch occupies residues 32–55 (TSPNDSSPLSTEKHKTESWDWPWQ).

It belongs to the ATPase protein 8 family. Component of the ATP synthase complex composed at least of ATP5F1A/subunit alpha, ATP5F1B/subunit beta, ATP5MC1/subunit c (homooctomer), MT-ATP6/subunit a, MT-ATP8/subunit 8, ATP5ME/subunit e, ATP5MF/subunit f, ATP5MG/subunit g, ATP5MK/subunit k, ATP5MJ/subunit j, ATP5F1C/subunit gamma, ATP5F1D/subunit delta, ATP5F1E/subunit epsilon, ATP5PF/subunit F6, ATP5PB/subunit b, ATP5PD/subunit d, ATP5PO/subunit OSCP. ATP synthase complex consists of a soluble F(1) head domain (subunits alpha(3) and beta(3)) - the catalytic core - and a membrane F(0) domain - the membrane proton channel (subunits c, a, 8, e, f, g, k and j). These two domains are linked by a central stalk (subunits gamma, delta, and epsilon) rotating inside the F1 region and a stationary peripheral stalk (subunits F6, b, d, and OSCP).

Its subcellular location is the mitochondrion membrane. Its function is as follows. Subunit 8, of the mitochondrial membrane ATP synthase complex (F(1)F(0) ATP synthase or Complex V) that produces ATP from ADP in the presence of a proton gradient across the membrane which is generated by electron transport complexes of the respiratory chain. ATP synthase complex consist of a soluble F(1) head domain - the catalytic core - and a membrane F(1) domain - the membrane proton channel. These two domains are linked by a central stalk rotating inside the F(1) region and a stationary peripheral stalk. During catalysis, ATP synthesis in the catalytic domain of F(1) is coupled via a rotary mechanism of the central stalk subunits to proton translocation. In vivo, can only synthesize ATP although its ATP hydrolase activity can be activated artificially in vitro. Part of the complex F(0) domain. This is ATP synthase F(0) complex subunit 8 from Formosania lacustris (Oriental stream loach).